A 242-amino-acid chain; its full sequence is ATP-dependent dethiobiotin synthetase BioD (242 aa).

12–17 (EVGKTV) lines the ATP pocket. Threonine 16 contacts Mg(2+). Lysine 37 is an active-site residue. Serine 41 contacts substrate. ATP-binding positions include aspartate 51 and 112–115 (EGAG). Positions 51 and 112 each coordinate Mg(2+).

Belongs to the dethiobiotin synthetase family. As to quaternary structure, homodimer. It depends on Mg(2+) as a cofactor.

The protein localises to the cytoplasm. The catalysed reaction is (7R,8S)-7,8-diammoniononanoate + CO2 + ATP = (4R,5S)-dethiobiotin + ADP + phosphate + 3 H(+). It participates in cofactor biosynthesis; biotin biosynthesis; biotin from 7,8-diaminononanoate: step 1/2. In terms of biological role, catalyzes a mechanistically unusual reaction, the ATP-dependent insertion of CO2 between the N7 and N8 nitrogen atoms of 7,8-diaminopelargonic acid (DAPA, also called 7,8-diammoniononanoate) to form a ureido ring. In Bacillus thuringiensis subsp. konkukian (strain 97-27), this protein is ATP-dependent dethiobiotin synthetase BioD.